A 67-amino-acid chain; its full sequence is Small ribosomal subunit protein eS17 (67 aa).

Belongs to the eukaryotic ribosomal protein eS17 family.

The chain is Small ribosomal subunit protein eS17 from Pyrococcus abyssi (strain GE5 / Orsay).